The sequence spans 341 residues: Aromatic amino acid aminotransferase (341 aa).

Lys213 is modified (N6-(pyridoxal phosphate)lysine).

Belongs to the class-II pyridoxal-phosphate-dependent aminotransferase family. In terms of assembly, homodimer. It depends on pyridoxal 5'-phosphate as a cofactor.

The catalysed reaction is an aromatic L-alpha-amino acid + 2-oxoglutarate = an aromatic oxo-acid + L-glutamate. Functionally, aminotransferase that catalyzes the conversion of aromatic amino acids and 2-oxoglutarate into corresponding aromatic oxo acids and L-glutamate. May catalyze the transamination reaction in phenylalanine biosynthesis. This is Aromatic amino acid aminotransferase from Corynebacterium glutamicum (strain ATCC 13032 / DSM 20300 / JCM 1318 / BCRC 11384 / CCUG 27702 / LMG 3730 / NBRC 12168 / NCIMB 10025 / NRRL B-2784 / 534).